We begin with the raw amino-acid sequence, 353 residues long: Photosystem II D2 protein (353 aa).

N-acetylthreonine is present on Thr-2. Thr-2 bears the Phosphothreonine mark. Residues 41 to 61 (CAYFAVGGWFTGTTFVTSWYT) traverse the membrane as a helical segment. His-118 is a binding site for chlorophyll a. Residues 125–141 (GFMLRQFELARSVQLRP) traverse the membrane as a helical segment. Pheophytin a-binding residues include Gln-130 and Asn-143. The chain crosses the membrane as a helical span at residues 153 to 166 (VFVSVFLIYPLGQS). His-198 is a chlorophyll a binding site. The helical transmembrane segment at 208-228 (AALLCAIHGATVENTLFEDGD) threads the bilayer. His-215 and Phe-262 together coordinate a plastoquinone. Fe cation is bound at residue His-215. His-269 contributes to the Fe cation binding site. Residues 279–295 (GLWMSALGVVGLALNLR) form a helical membrane-spanning segment.

It belongs to the reaction center PufL/M/PsbA/D family. PSII is composed of 1 copy each of membrane proteins PsbA, PsbB, PsbC, PsbD, PsbE, PsbF, PsbH, PsbI, PsbJ, PsbK, PsbL, PsbM, PsbT, PsbX, PsbY, PsbZ, Psb30/Ycf12, at least 3 peripheral proteins of the oxygen-evolving complex and a large number of cofactors. It forms dimeric complexes. Requires The D1/D2 heterodimer binds P680, chlorophylls that are the primary electron donor of PSII, and subsequent electron acceptors. It shares a non-heme iron and each subunit binds pheophytin, quinone, additional chlorophylls, carotenoids and lipids. There is also a Cl(-1) ion associated with D1 and D2, which is required for oxygen evolution. The PSII complex binds additional chlorophylls, carotenoids and specific lipids. as cofactor.

It localises to the plastid. The protein localises to the chloroplast thylakoid membrane. The enzyme catalyses 2 a plastoquinone + 4 hnu + 2 H2O = 2 a plastoquinol + O2. Photosystem II (PSII) is a light-driven water:plastoquinone oxidoreductase that uses light energy to abstract electrons from H(2)O, generating O(2) and a proton gradient subsequently used for ATP formation. It consists of a core antenna complex that captures photons, and an electron transfer chain that converts photonic excitation into a charge separation. The D1/D2 (PsbA/PsbD) reaction center heterodimer binds P680, the primary electron donor of PSII as well as several subsequent electron acceptors. D2 is needed for assembly of a stable PSII complex. The polypeptide is Photosystem II D2 protein (Lactuca sativa (Garden lettuce)).